A 332-amino-acid chain; its full sequence is L-lactate dehydrogenase A chain (332 aa).

NAD(+)-binding positions include 29-57 (GMVG…MEDK) and arginine 99. Positions 106, 138, and 169 each coordinate substrate. Asparagine 138 is a binding site for NAD(+). The active-site Proton acceptor is the histidine 193. Threonine 248 is a binding site for substrate.

The protein belongs to the LDH/MDH superfamily. LDH family. Homotetramer.

It is found in the cytoplasm. It carries out the reaction (S)-lactate + NAD(+) = pyruvate + NADH + H(+). The protein operates within fermentation; pyruvate fermentation to lactate; (S)-lactate from pyruvate: step 1/1. Functionally, interconverts simultaneously and stereospecifically pyruvate and lactate with concomitant interconversion of NADH and NAD(+). The polypeptide is L-lactate dehydrogenase A chain (ldha) (Gillichthys seta (Shortjaw mudsucker)).